A 92-amino-acid chain; its full sequence is Islet amyloid polypeptide (92 aa).

The N-terminal stretch at 1–22 (MCLLRLPVTLLVLCVALNELKA) is a signal peptide. The propeptide occupies 23–34 (TSIASDTGHQVG). Cysteine 38 and cysteine 43 are joined by a disulfide. Tyrosine 73 is modified (tyrosine amide). The propeptide occupies 77–92 (NAPQISDRELLHYLPL).

Belongs to the calcitonin family. As to quaternary structure, can form homodimers. Interacts with IDE and INS. Interaction with INS inhibits homodimerization and fibril formation.

The protein localises to the secreted. Amylin/IAPP is a glucoregulatory peptide hormone that plays an important role in the regulation of energy homeostasis. Selectively inhibits insulin-stimulated glucose utilization and glycogen deposition in muscle, while not affecting adipocyte glucose metabolism. IAPP function is mediated by the CALCR-RAMPs (AMYRs) receptor complexes. Amylin can also bind CALCR receptor in the absence of RAMPs, although it is more selective for AMYRs. The protein is Islet amyloid polypeptide (IAPP) of Cavia porcellus (Guinea pig).